The primary structure comprises 137 residues: Large ribosomal subunit protein uL16 (137 aa).

It belongs to the universal ribosomal protein uL16 family. Part of the 50S ribosomal subunit.

In terms of biological role, binds 23S rRNA and is also seen to make contacts with the A and possibly P site tRNAs. This Streptococcus agalactiae serotype Ia (strain ATCC 27591 / A909 / CDC SS700) protein is Large ribosomal subunit protein uL16.